Here is a 386-residue protein sequence, read N- to C-terminus: ATP phosphoribosyltransferase regulatory subunit (386 aa).

The protein belongs to the class-II aminoacyl-tRNA synthetase family. HisZ subfamily. Heteromultimer composed of HisG and HisZ subunits.

The protein localises to the cytoplasm. It functions in the pathway amino-acid biosynthesis; L-histidine biosynthesis; L-histidine from 5-phospho-alpha-D-ribose 1-diphosphate: step 1/9. Required for the first step of histidine biosynthesis. May allow the feedback regulation of ATP phosphoribosyltransferase activity by histidine. This chain is ATP phosphoribosyltransferase regulatory subunit, found in Limosilactobacillus fermentum (strain NBRC 3956 / LMG 18251) (Lactobacillus fermentum).